We begin with the raw amino-acid sequence, 273 residues long: 4-hydroxy-tetrahydrodipicolinate reductase (273 aa).

Residues 11 to 16 (GAGGRM) and glutamate 36 each bind NAD(+). Arginine 37 is an NADP(+) binding site. NAD(+) contacts are provided by residues 100-102 (GTT) and 124-127 (AANY). The active-site Proton donor/acceptor is histidine 157. Residue histidine 158 coordinates (S)-2,3,4,5-tetrahydrodipicolinate. Catalysis depends on lysine 161, which acts as the Proton donor. 167-168 (GT) contacts (S)-2,3,4,5-tetrahydrodipicolinate.

The protein belongs to the DapB family.

The protein resides in the cytoplasm. It catalyses the reaction (S)-2,3,4,5-tetrahydrodipicolinate + NAD(+) + H2O = (2S,4S)-4-hydroxy-2,3,4,5-tetrahydrodipicolinate + NADH + H(+). The catalysed reaction is (S)-2,3,4,5-tetrahydrodipicolinate + NADP(+) + H2O = (2S,4S)-4-hydroxy-2,3,4,5-tetrahydrodipicolinate + NADPH + H(+). The protein operates within amino-acid biosynthesis; L-lysine biosynthesis via DAP pathway; (S)-tetrahydrodipicolinate from L-aspartate: step 4/4. In terms of biological role, catalyzes the conversion of 4-hydroxy-tetrahydrodipicolinate (HTPA) to tetrahydrodipicolinate. The polypeptide is 4-hydroxy-tetrahydrodipicolinate reductase (Acinetobacter baumannii (strain ACICU)).